Reading from the N-terminus, the 467-residue chain is Hydroxyacid-oxoacid transhydrogenase, mitochondrial (467 aa).

The residue at position 445 (Lys445) is an N6-acetyllysine. The residue at position 452 (Ser452) is a Phosphoserine.

This sequence belongs to the iron-containing alcohol dehydrogenase family. Hydroxyacid-oxoacid transhydrogenase subfamily.

It is found in the mitochondrion. The enzyme catalyses (S)-3-hydroxybutanoate + 2-oxoglutarate = (R)-2-hydroxyglutarate + acetoacetate. It carries out the reaction 4-hydroxybutanoate + 2-oxoglutarate = (R)-2-hydroxyglutarate + succinate semialdehyde. Functionally, catalyzes the cofactor-independent reversible oxidation of gamma-hydroxybutyrate (GHB) to succinic semialdehyde (SSA) coupled to reduction of 2-ketoglutarate (2-KG) to D-2-hydroxyglutarate (D-2-HG). L-3-hydroxybutyrate (L-3-OHB) is also a substrate for HOT when using 2-KG as hydrogen acceptor, resulting in the formation of D-2-HG. In Pongo abelii (Sumatran orangutan), this protein is Hydroxyacid-oxoacid transhydrogenase, mitochondrial (ADHFE1).